Reading from the N-terminus, the 191-residue chain is Fe/S biogenesis protein NfuA (191 aa).

2 residues coordinate [4Fe-4S] cluster: cysteine 149 and cysteine 152.

It belongs to the NfuA family. Homodimer. It depends on [4Fe-4S] cluster as a cofactor.

Involved in iron-sulfur cluster biogenesis. Binds a 4Fe-4S cluster, can transfer this cluster to apoproteins, and thereby intervenes in the maturation of Fe/S proteins. Could also act as a scaffold/chaperone for damaged Fe/S proteins. The sequence is that of Fe/S biogenesis protein NfuA from Cronobacter sakazakii (strain ATCC BAA-894) (Enterobacter sakazakii).